We begin with the raw amino-acid sequence, 781 residues long: 5-methyltetrahydropteroyltriglutamate--homocysteine methyltransferase (781 aa).

Residues 20 to 23 and lysine 131 contribute to the 5-methyltetrahydropteroyltri-L-glutamate site; that span reads RELK. L-homocysteine-binding positions include 453 to 455 and glutamate 506; that span reads IGS. L-methionine is bound by residues 453–455 and glutamate 506; that span reads IGS. Residues 537 to 538 and tryptophan 583 each bind 5-methyltetrahydropteroyltri-L-glutamate; that span reads RC. Aspartate 621 provides a ligand contact to L-homocysteine. Residue aspartate 621 coordinates L-methionine. Residue glutamate 627 participates in 5-methyltetrahydropteroyltri-L-glutamate binding. Residues histidine 663, cysteine 665, and glutamate 687 each coordinate Zn(2+). Catalysis depends on histidine 716, which acts as the Proton donor. Cysteine 748 is a Zn(2+) binding site.

Belongs to the vitamin-B12 independent methionine synthase family. Zn(2+) serves as cofactor.

The enzyme catalyses 5-methyltetrahydropteroyltri-L-glutamate + L-homocysteine = tetrahydropteroyltri-L-glutamate + L-methionine. It participates in amino-acid biosynthesis; L-methionine biosynthesis via de novo pathway; L-methionine from L-homocysteine (MetE route): step 1/1. Functionally, catalyzes the transfer of a methyl group from 5-methyltetrahydrofolate to homocysteine resulting in methionine formation. The polypeptide is 5-methyltetrahydropteroyltriglutamate--homocysteine methyltransferase (Bradyrhizobium diazoefficiens (strain JCM 10833 / BCRC 13528 / IAM 13628 / NBRC 14792 / USDA 110)).